The following is a 611-amino-acid chain: Leukotriene A-4 hydrolase (611 aa).

Lysine 73 bears the N6-acetyllysine mark. A peptide is bound by residues 135–137 and 267–272; these read QCQ and PYGGME. Position 296 (histidine 296) interacts with Zn(2+). Glutamate 297 functions as the Proton acceptor in the catalytic mechanism. Zn(2+) is bound by residues histidine 300 and glutamate 319. Lysine 337 carries the N6-acetyllysine modification. Tyrosine 384 acts as the Proton donor in catalysis. Lysine 414 is modified (N6-acetyllysine). Position 416 is a phosphoserine (serine 416). Position 564-566 (564-566) interacts with a peptide; it reads RMK. Lysine 573 carries the post-translational modification N6-acetyllysine.

It belongs to the peptidase M1 family. As to quaternary structure, monomer. Zn(2+) is required as a cofactor. Phosphorylation at Ser-416 inhibits leukotriene-A4 hydrolase activity. Isoform 1 and isoform 2 are expressed in monocytes, lymphocytes, neutrophils, reticulocytes, platelets and fibroblasts.

The protein resides in the cytoplasm. The catalysed reaction is leukotriene A4 + H2O = leukotriene B4. It carries out the reaction (5S,6S)-epoxy-(18R)-hydroxy-(7E,9E,11Z,14Z,16E)-eicosapentaenoate + H2O = resolvin E1. It catalyses the reaction (5S,6S)-epoxy-(18S)-hydroxy-(7E,9E,11Z,14Z,16E)-eicosapentaenoate + H2O = 18S-resolvin E1. The enzyme catalyses Release of the N-terminal residue from a tripeptide.. It functions in the pathway lipid metabolism; leukotriene B4 biosynthesis. Inhibited by bestatin. The epoxide hydrolase activity is restrained by suicide inactivation that involves binding of LTA4 to Tyr-379. 4-(4-benzylphenyl)thiazol-2-amine (ARM1) selectively inhibits the epoxide hydrolase activity. In terms of biological role, bifunctional zinc metalloenzyme that comprises both epoxide hydrolase (EH) and aminopeptidase activities. Acts as an epoxide hydrolase to catalyze the conversion of LTA4 to the pro-inflammatory mediator leukotriene B4 (LTB4). Also has aminopeptidase activity, with high affinity for N-terminal arginines of various synthetic tripeptides. In addition to its pro-inflammatory EH activity, may also counteract inflammation by its aminopeptidase activity, which inactivates by cleavage another neutrophil attractant, the tripeptide Pro-Gly-Pro (PGP), a bioactive fragment of collagen generated by the action of matrix metalloproteinase-9 (MMP9) and prolylendopeptidase (PREPL). Involved also in the biosynthesis of resolvin E1 and 18S-resolvin E1 from eicosapentaenoic acid, two lipid mediators that show potent anti-inflammatory and pro-resolving actions. This chain is Leukotriene A-4 hydrolase (LTA4H), found in Homo sapiens (Human).